The primary structure comprises 230 residues: Protein UPS2, mitochondrial (230 aa).

A PRELI/MSF1 domain is found at 1–175 (MKLFQNSYDF…VLQVFSENWE (175 aa)).

The protein belongs to the slowmo family. As to quaternary structure, interacts with MDM35.

It is found in the mitochondrion inner membrane. The protein resides in the mitochondrion intermembrane space. Functionally, required for mitochondrial cristae morphogenesis and MGM1-processing. Controls the stability of mitochondrial phosphatidylethanolamine (PE). With UPS1, controls the level of cardiolipin in mitochondria. Cardiolipin is a unique phospholipid with four fatty acid chains and is present mainly in the mitochondrial inner membrane where it stabilizes the electron transport chain supercomplex between complexes III and IV through direct interaction of their subunits. The sequence is that of Protein UPS2, mitochondrial (UPS2) from Saccharomyces cerevisiae (strain ATCC 204508 / S288c) (Baker's yeast).